The primary structure comprises 130 residues: Small ribosomal subunit protein uS9 (130 aa).

Belongs to the universal ribosomal protein uS9 family.

The chain is Small ribosomal subunit protein uS9 from Salmonella paratyphi C (strain RKS4594).